A 227-amino-acid polypeptide reads, in one-letter code: YEATS domain-containing protein 4 (227 aa).

The YEATS domain occupies 15–158 (RVKGVTIVKP…AMMQQLLTTS (144 aa)). A Glycyl lysine isopeptide (Lys-Gly) (interchain with G-Cter in SUMO2) cross-link involves residue lysine 37. Residues 93–97 (WGEFE) form a diacetylated histone H3 binding region. The interaction with MLLT10 stretch occupies residues 163–227 (LGAYKHETEF…LEEDDQTKDI (65 aa)). The tract at residues 168–227 (HETEFAELEVKTREKLEAAKKKTSFEIAELKERLKASRETINCLKNEIRKLEEDDQTKDI) is interaction with TACC1. Residues 178–226 (KTREKLEAAKKKTSFEIAELKERLKASRETINCLKNEIRKLEEDDQTKD) adopt a coiled-coil conformation.

In terms of assembly, component of numerous complexes with chromatin remodeling and histone acetyltransferase activity. Component of the NuA4 histone acetyltransferase complex which contains the catalytic subunit KAT5/TIP60 and the subunits EP400, TRRAP/PAF400, BRD8/SMAP, EPC1, DMAP1/DNMAP1, RUVBL1/TIP49, RUVBL2, ING3, actin, ACTL6A/BAF53A, MORF4L1/MRG15, MORF4L2/MRGX, MRGBP, YEATS4/GAS41, VPS72/YL1 and MEAF6. The NuA4 complex interacts with MYC and the adenovirus E1A protein. Component of a NuA4-related complex which contains EP400, TRRAP/PAF400, SRCAP, BRD8/SMAP, EPC1, DMAP1/DNMAP1, RUVBL1/TIP49, RUVBL2, actin, ACTL6A/BAF53A, VPS72 and YEATS4/GAS41. Interacts with MLLT10/AF10. Also interacts with the SWI/SNF component SMARCB1/BAF47, TACC1 and TACC2, and the nuclear matrix protein NUMA1.

Its subcellular location is the nucleus. Chromatin reader component of the NuA4 histone acetyltransferase (HAT) complex, a complex involved in transcriptional activation of select genes principally by acetylation of nucleosomal histones H4 and H2A. Specifically recognizes and binds acylated histone H3, with a preference for histone H3 diacetylated at 'Lys-18' and 'Lys-27' (H3K18ac and H3K27ac) or histone H3 diacetylated at 'Lys-14' and 'Lys-27' (H3K14ac and H3K27ac). Also able to recognize and bind crotonylated histone H3. May also recognize and bind histone H3 succinylated at 'Lys-122' (H3K122succ); additional evidences are however required to confirm this result in vivo. Plays a key role in histone variant H2AZ1/H2A.Z deposition into specific chromatin regions: recognizes and binds H3K14ac and H3K27ac on the promoters of actively transcribed genes and recruits NuA4-related complex to deposit H2AZ1/H2A.Z. H2AZ1/H2A.Z deposition is required for maintenance of embryonic stem cell. The sequence is that of YEATS domain-containing protein 4 from Mus musculus (Mouse).